The following is a 706-amino-acid chain: Transcription factor 12 (706 aa).

The disordered stretch occupies residues 25–109 (AMFSPPVNSG…TPFMNSNLIG (85 aa)). Polar residues-rich tracts occupy residues 30-48 (PVNS…QFSG) and 56-76 (GTTS…SRGF). A phosphoserine mark is found at S47, S67, and S79. Over residues 81 to 93 (HYSDHLNDSRLGT) the composition is skewed to basic and acidic residues. S98 is subject to Phosphoserine. K110 participates in a covalent cross-link: Glycyl lysine isopeptide (Lys-Gly) (interchain with G-Cter in SUMO2). A phosphoserine mark is found at S116 and S124. A leucine-zipper region spans residues 119–140 (LYSRDSGLSGCQSSLLRQDLGL). Disordered regions lie at residues 140–222 (LGSP…SMFA) and 249–313 (FGGI…ASHT). The span at 144–163 (AQLSSSGKPGTPYYSFSATS) shows a compositional bias: polar residues. A Glycyl lysine isopeptide (Lys-Gly) (interchain with G-Cter in SUMO2) cross-link involves residue K181. The short motif at 181–188 (KKVRKVPP) is the Nuclear localization signal element. Residues 256-269 (STSHMSQSSSYGSL) are compositionally biased toward low complexity. The span at 282–306 (VSPTDINTSLPPMSSFHRGSTSSSP) shows a compositional bias: polar residues. Phosphothreonine is present on T313. S333 is subject to Phosphoserine. Disordered stretches follow at residues 349–392 (PDHT…YENS) and 520–604 (HKTP…ERRM). The span at 352–363 (TSSSFPSNPSTP) shows a compositional bias: low complexity. Composition is skewed to polar residues over residues 364-376 (VGSP…TSQW) and 383-392 (APSSPSYENS). Phosphoserine is present on S392. Basic and acidic residues-rich tracts occupy residues 542–554 (IKTE…ENLH) and 560–575 (DDMK…DIKV). Residue K543 forms a Glycyl lysine isopeptide (Lys-Gly) (interchain with G-Cter in SUMO2) linkage. S564 is modified (phosphoserine). K574 participates in a covalent cross-link: Glycyl lysine isopeptide (Lys-Gly) (interchain with G-Cter in SUMO2). T581 carries the post-translational modification Phosphothreonine. Phosphoserine is present on residues S582 and S583. Over residues 592 to 604 (PEQKIEREKERRM) the composition is skewed to basic and acidic residues. Positions 601-654 (ERRMANNARERLRVRDINEAFKELGRMCQLHLKSEKPQTKLLILHQAVAVILSL) constitute a bHLH domain. Glycyl lysine isopeptide (Lys-Gly) (interchain with G-Cter in SUMO2) cross-links involve residues K633 and K677. The segment at 656 to 679 (QQVRERNLNPKAACLKRREEEKVS) is class A specific domain. A disordered region spans residues 674-706 (EEEKVSAASAEPPNTLPGAHPGLSESTNPMGHL). Residues 697 to 706 (SESTNPMGHL) are compositionally biased toward polar residues.

In terms of assembly, efficient DNA binding requires dimerization with another bHLH protein. Forms homo- or heterooligomers with myogenin, E12 and ITF2 proteins and RUNX1T1. Interacts with PTF1A. Interacts with NEUROD2. Interacts with BHLHA9. Widely expressed.

It localises to the nucleus. In terms of biological role, transcriptional regulator. Involved in the initiation of neuronal differentiation. Activates transcription by binding to the E box (5'-CANNTG-3'). May be involved in the functional network that regulates the development of the GnRH axis. This is Transcription factor 12 (Tcf12) from Mus musculus (Mouse).